Here is a 763-residue protein sequence, read N- to C-terminus: Ethylene receptor 2 (763 aa).

Helical transmembrane passes span 58-78 (FLIA…ATCS), 86-106 (IVLQ…ITMF), and 115-135 (VVLA…ATAI). Cu cation-binding residues include C97 and H101. The GAF domain occupies 190–339 (DRHTILYTTM…VVADQVAVAL (150 aa)). The Histidine kinase domain maps to 382–615 (AMYDGMRRPM…TIMLALQFQL (234 aa)). In terms of domain architecture, Response regulatory spans 641-760 (QVILVDSDDT…ALGDELYRVL (120 aa)). A 4-aspartylphosphate modification is found at D692.

It belongs to the ethylene receptor family. Requires Cu cation as cofactor. Autophosphorylated on serine, threonine and tyrosine residues.

It localises to the endoplasmic reticulum membrane. It catalyses the reaction ATP + protein L-histidine = ADP + protein N-phospho-L-histidine.. Ethylene receptor related to bacterial two-component regulators. Acts as a negative regulator of ethylene signaling. May delay the transition from the vegetative stage to the floral stage by up-regulating GI (GIGANTEA) and RCN1 and cause starch accumulation in stems by down-regulating the alpha-amylase AMY3D. The protein is Ethylene receptor 2 of Oryza sativa subsp. japonica (Rice).